The chain runs to 580 residues: Proline--tRNA ligase (580 aa).

Belongs to the class-II aminoacyl-tRNA synthetase family. ProS type 1 subfamily. Homodimer.

Its subcellular location is the cytoplasm. It carries out the reaction tRNA(Pro) + L-proline + ATP = L-prolyl-tRNA(Pro) + AMP + diphosphate. In terms of biological role, catalyzes the attachment of proline to tRNA(Pro) in a two-step reaction: proline is first activated by ATP to form Pro-AMP and then transferred to the acceptor end of tRNA(Pro). As ProRS can inadvertently accommodate and process non-cognate amino acids such as alanine and cysteine, to avoid such errors it has two additional distinct editing activities against alanine. One activity is designated as 'pretransfer' editing and involves the tRNA(Pro)-independent hydrolysis of activated Ala-AMP. The other activity is designated 'posttransfer' editing and involves deacylation of mischarged Ala-tRNA(Pro). The misacylated Cys-tRNA(Pro) is not edited by ProRS. The chain is Proline--tRNA ligase from Polynucleobacter necessarius subsp. necessarius (strain STIR1).